The sequence spans 199 residues: Probable nicotinate-nucleotide adenylyltransferase (199 aa).

It belongs to the NadD family.

The enzyme catalyses nicotinate beta-D-ribonucleotide + ATP + H(+) = deamido-NAD(+) + diphosphate. Its pathway is cofactor biosynthesis; NAD(+) biosynthesis; deamido-NAD(+) from nicotinate D-ribonucleotide: step 1/1. Its function is as follows. Catalyzes the reversible adenylation of nicotinate mononucleotide (NaMN) to nicotinic acid adenine dinucleotide (NaAD). This chain is Probable nicotinate-nucleotide adenylyltransferase, found in Roseobacter denitrificans (strain ATCC 33942 / OCh 114) (Erythrobacter sp. (strain OCh 114)).